Reading from the N-terminus, the 414-residue chain is Na(+)/H(+) antiporter NhaA (414 aa).

Transmembrane regions (helical) follow at residues 22–42 (VGGF…NSPF), 61–81 (LHLT…FFVV), 101–121 (MLPI…YAAF), 131–151 (GWGI…AVVG), 171–191 (LGAI…LPLI), 215–235 (SAAL…WALV), 239–259 (GVHA…VPLA), 281–301 (VLPV…LGAV), 308–328 (LGII…GSWV), 343–363 (WIDI…SLLI), and 379–399 (KAGV…VLAV).

Belongs to the NhaA Na(+)/H(+) (TC 2.A.33) antiporter family.

The protein resides in the cell membrane. It carries out the reaction Na(+)(in) + 2 H(+)(out) = Na(+)(out) + 2 H(+)(in). In terms of biological role, na(+)/H(+) antiporter that extrudes sodium in exchange for external protons. This Thermobifida fusca (strain YX) protein is Na(+)/H(+) antiporter NhaA.